Here is a 492-residue protein sequence, read N- to C-terminus: NADH-quinone oxidoreductase subunit N (492 aa).

14 helical membrane-spanning segments follow: residues 18-38 (ILPM…NAFT), 45-65 (LNMF…LGLE), 80-100 (LSLV…FLAL), 108-128 (FQTA…QFMV), 133-153 (LLLM…LMAL), 167-187 (FTMG…FYLL), 209-229 (MLFA…VSLV), 250-270 (ISIV…GAFI), 277-297 (VEDI…LIAL), 305-325 (MLAY…FIHT), 333-353 (FVYW…LWLL), 381-401 (VAIL…FSVF), 415-435 (NHIL…FYYF), and 464-484 (MPIY…VFMM).

Belongs to the complex I subunit 2 family. As to quaternary structure, NDH-1 is composed of 14 different subunits. Subunits NuoA, H, J, K, L, M, N constitute the membrane sector of the complex.

The protein localises to the cell inner membrane. The enzyme catalyses a quinone + NADH + 5 H(+)(in) = a quinol + NAD(+) + 4 H(+)(out). NDH-1 shuttles electrons from NADH, via FMN and iron-sulfur (Fe-S) centers, to quinones in the respiratory chain. The immediate electron acceptor for the enzyme in this species is believed to be ubiquinone. Couples the redox reaction to proton translocation (for every two electrons transferred, four hydrogen ions are translocated across the cytoplasmic membrane), and thus conserves the redox energy in a proton gradient. In Helicobacter acinonychis (strain Sheeba), this protein is NADH-quinone oxidoreductase subunit N.